Here is a 581-residue protein sequence, read N- to C-terminus: Arginine--tRNA ligase (581 aa).

The 'HIGH' region signature appears at 123-133; that stretch reads PNVAKEMHVGH.

It belongs to the class-I aminoacyl-tRNA synthetase family. In terms of assembly, monomer.

It is found in the cytoplasm. It carries out the reaction tRNA(Arg) + L-arginine + ATP = L-arginyl-tRNA(Arg) + AMP + diphosphate. This chain is Arginine--tRNA ligase, found in Blochmanniella pennsylvanica (strain BPEN).